The primary structure comprises 218 residues: MGQKINPLGFRLGTTQSHHSLWFAQPKKYSEGLEEDKKIRDCIKNYVQNNIRISSGMEGIARIEIQKRIDLIQIIIYMGFPKLLIEDKPRRIEELQINVQKELNCVNRKLNIAITRISNPYGHPNILAEFIAGQLKNRVSFRKAMKKAIELTEQANTKGIQVQIAGRIDGKEIARVEWIREGRVPLQTIDAKIDYCSYTVRTIYGVLGIKIWIFVDEE.

The 72-residue stretch at 47–118 (VQNNIRISSG…KLNIAITRIS (72 aa)) folds into the KH type-2 domain.

Belongs to the universal ribosomal protein uS3 family. As to quaternary structure, part of the 30S ribosomal subunit.

The protein resides in the plastid. It localises to the chloroplast. This is Small ribosomal subunit protein uS3c (rps3) from Draba nemorosa (Woodland whitlowgrass).